The primary structure comprises 190 residues: MATENKNLSEYDKNTIPNAKDFRFGIVVSEWNDVITEGLYNGAFEALIDCDVPAQQIIRWNVPGSFELIYGAKKMLQTQNVDAVIVIGCVIQGETKHFDFVCEGVTQGIKDLNVQTDIPVIFCVLTDNNMQQSIDRSGGVHGNKGTEAAIAAIKMAYIRQQASISHPFNQPLLSSGALQIEETPIKIEKE.

5-amino-6-(D-ribitylamino)uracil-binding positions include Trp-31, Ser-65–Glu-67, and Cys-89–Ile-91. Residue Glu-94–Thr-95 coordinates (2S)-2-hydroxy-3-oxobutyl phosphate. The active-site Proton donor is His-97. A 5-amino-6-(D-ribitylamino)uracil-binding site is contributed by Phe-122. Residue Arg-136 participates in (2S)-2-hydroxy-3-oxobutyl phosphate binding.

This sequence belongs to the DMRL synthase family.

It catalyses the reaction (2S)-2-hydroxy-3-oxobutyl phosphate + 5-amino-6-(D-ribitylamino)uracil = 6,7-dimethyl-8-(1-D-ribityl)lumazine + phosphate + 2 H2O + H(+). Its pathway is cofactor biosynthesis; riboflavin biosynthesis; riboflavin from 2-hydroxy-3-oxobutyl phosphate and 5-amino-6-(D-ribitylamino)uracil: step 1/2. Functionally, catalyzes the formation of 6,7-dimethyl-8-ribityllumazine by condensation of 5-amino-6-(D-ribitylamino)uracil with 3,4-dihydroxy-2-butanone 4-phosphate. This is the penultimate step in the biosynthesis of riboflavin. The sequence is that of 6,7-dimethyl-8-ribityllumazine synthase from Flavobacterium johnsoniae (strain ATCC 17061 / DSM 2064 / JCM 8514 / BCRC 14874 / CCUG 350202 / NBRC 14942 / NCIMB 11054 / UW101) (Cytophaga johnsonae).